A 339-amino-acid polypeptide reads, in one-letter code: MVVIEAILDRAKIFIEKAQDLQDLEDLRTNVLGKKGELTTLLKGLGKLSKEQRPKMGEAINQIKVNIQVLLADKKNNLELIALEKRFLAEKIDVSLPGRHAEMGGLHPITITLNRIQSLFVKNSFEVVLGPEIEDNFYNFTALNIPEHHPARAMHDTFYFDKNTVLRTHTSPVQIRTLEKQKPPVRIIAPGRVYRRDLDITHTPMFHQVEGLIVDKHANFAQLKGLLIDFLRAYFEKEVLKVRFRPSYFPFTEPSAEADIECVICSGKGCRVCKKMGWLEVLGCGVVHPNVLSSVNIDSEVYTGLAFGIGIERLAMLRYGVNDLRLFFENDSRFLRQFR.

A Mg(2+)-binding site is contributed by Glu253.

It belongs to the class-II aminoacyl-tRNA synthetase family. Phe-tRNA synthetase alpha subunit type 1 subfamily. As to quaternary structure, tetramer of two alpha and two beta subunits. Requires Mg(2+) as cofactor.

Its subcellular location is the cytoplasm. The catalysed reaction is tRNA(Phe) + L-phenylalanine + ATP = L-phenylalanyl-tRNA(Phe) + AMP + diphosphate + H(+). This Ruthia magnifica subsp. Calyptogena magnifica protein is Phenylalanine--tRNA ligase alpha subunit.